The sequence spans 289 residues: Iodotyrosine deiodinase 1 (289 aa).

Residues 1-21 form a helical membrane-spanning segment; sequence MFLLTPVLVAVVCILMVWIFK. FMN-binding positions include 100 to 104 and 128 to 129; these read RRSVR and SG. The 3,5-diiodo-L-tyrosine site is built by Ala-130, Glu-157, Tyr-161, and Lys-182. 3-iodo-L-tyrosine-binding residues include Ala-130, Glu-157, Tyr-161, and Lys-182. Residues 237-239 and Arg-279 each bind FMN; that span reads TTT.

This sequence belongs to the nitroreductase family. Homodimer. FMN serves as cofactor. As to expression, detected in thyroid (at protein level).

The protein resides in the cell membrane. It localises to the cytoplasmic vesicle membrane. It carries out the reaction 2 iodide + L-tyrosine + 2 NADP(+) = 3,5-diiodo-L-tyrosine + 2 NADPH + H(+). It catalyses the reaction iodide + L-tyrosine + NADP(+) = 3-iodo-L-tyrosine + NADPH. The catalysed reaction is 3-iodo-L-tyrosine + iodide + NADP(+) = 3,5-diiodo-L-tyrosine + NADPH + H(+). The enzyme catalyses L-tyrosine + chloride + NADP(+) = 3-chloro-L-tyrosine + NADPH. It carries out the reaction bromide + L-tyrosine + NADP(+) = 3-bromo-L-tyrosine + NADPH. Functionally, catalyzes the dehalogenation of halotyrosines such as 3-bromo-L-tyrosine, 3-chloro-L-tyrosine, 3-iodo-L-tyrosine and 3,5-diiodo-L-tyrosine. During thyroid hormone biosynthesis, facilitates iodide salvage by catalysing the oxidative NADPH-dependent deiodination of the halogenated by-products of thyroid hormone production, monoiodotyrosine (L-MIT) and diiodotyrosine (L-DIT). The scavanged iodide can then reenter the hormone-producing pathways. Acts more efficiently on 3-iodo-L-tyrosine than 3,5-diiodo-L-tyrosine. In Sus scrofa (Pig), this protein is Iodotyrosine deiodinase 1 (IYD).